Here is a 75-residue protein sequence, read N- to C-terminus: Signaling peptide TAXIMIN 1 (75 aa).

A signal peptide spans 1–29 (MCDGDCRPLGFLLGLPFAFLSLLLSIIGV).

As to expression, expressed in shoot apical meristems (SAM); mostly specific to the L1 layer in the center of the meristem but also detected in the L2 layer in organ primordia. Also observed in the vasculature of seedling roots.

It is found in the secreted. Counteracted by the antibiotic cefotaxime during responses to light stress. In terms of biological role, signaling peptide involved in the regulation of lateral organs separation, including fruits and leaves. Involved in the perception of and response to light stress via the control of sinapoyl-malate accumulation, a UV-B protecting compound. The protein is Signaling peptide TAXIMIN 1 of Arabidopsis thaliana (Mouse-ear cress).